Reading from the N-terminus, the 338-residue chain is Sorting nexin-15 (338 aa).

The PX domain occupies 1-131 (MSRRAKKDDF…EFFRGGEVTR (131 aa)). A 1,2-diacyl-sn-glycero-3-phospho-(1D-myo-inositol-3-phosphate) is bound by residues Arg-52, Ser-54, Arg-88, and Arg-97. The residue at position 106 (Arg-106) is an Omega-N-methylarginine. The disordered stretch occupies residues 134 to 155 (EVSRDLQILPPPLIPTPPSDEA). Residues 142–151 (LPPPLIPTPP) are compositionally biased toward pro residues. A phosphoserine mark is found at Ser-202 and Ser-228. The tract at residues 240-270 (VQSKRLDQEPWEPGGREEEEAEDGDPAPAYL) is disordered. Positions 266-338 (APAYLGQATE…RAETLHAHLP (73 aa)) constitute an MIT domain.

Belongs to the sorting nexin family. Homodimer. Interacts with SNX1, SNX2 and SNX4.

It localises to the cytoplasm. The protein localises to the membrane. It is found in the cytoplasmic vesicle membrane. In terms of biological role, may be involved in several stages of intracellular trafficking. Overexpression of SNX15 disrupts the normal trafficking of proteins from the plasma membrane to recycling endosomes or the TGN. This is Sorting nexin-15 (Snx15) from Rattus norvegicus (Rat).